Reading from the N-terminus, the 344-residue chain is GTP 3',8-cyclase (344 aa).

A Radical SAM core domain is found at 19–239; the sequence is PFGRTIDYLR…ANYTLTDLPD (221 aa). Arg28 provides a ligand contact to GTP. [4Fe-4S] cluster-binding residues include Cys35 and Cys39. Tyr41 serves as a coordination point for S-adenosyl-L-methionine. Residue Cys42 participates in [4Fe-4S] cluster binding. A GTP-binding site is contributed by Arg77. Residue Gly81 participates in S-adenosyl-L-methionine binding. Thr111 contacts GTP. S-adenosyl-L-methionine is bound at residue Ser135. Lys171 contributes to the GTP binding site. Met205 contributes to the S-adenosyl-L-methionine binding site. [4Fe-4S] cluster is bound by residues Cys268 and Cys271. Residue 273–275 coordinates GTP; the sequence is RVR. Cys285 contributes to the [4Fe-4S] cluster binding site.

The protein belongs to the radical SAM superfamily. MoaA family. In terms of assembly, monomer and homodimer. [4Fe-4S] cluster is required as a cofactor.

It carries out the reaction GTP + AH2 + S-adenosyl-L-methionine = (8S)-3',8-cyclo-7,8-dihydroguanosine 5'-triphosphate + 5'-deoxyadenosine + L-methionine + A + H(+). It participates in cofactor biosynthesis; molybdopterin biosynthesis. Catalyzes the cyclization of GTP to (8S)-3',8-cyclo-7,8-dihydroguanosine 5'-triphosphate. This is GTP 3',8-cyclase from Rhodopseudomonas palustris (strain TIE-1).